Reading from the N-terminus, the 97-residue chain is Large ribosomal subunit protein eL21 (97 aa).

The span at 1–12 (MPSSNGPRQATR) shows a compositional bias: polar residues. Residues 1–35 (MPSSNGPRQATRNKLKNDARERGTSPPQRSIEEYD) form a disordered region.

Belongs to the eukaryotic ribosomal protein eL21 family.

The sequence is that of Large ribosomal subunit protein eL21 from Natronomonas pharaonis (strain ATCC 35678 / DSM 2160 / CIP 103997 / JCM 8858 / NBRC 14720 / NCIMB 2260 / Gabara) (Halobacterium pharaonis).